The chain runs to 359 residues: Nicotinate-nucleotide--dimethylbenzimidazole phosphoribosyltransferase (359 aa).

The active-site Proton acceptor is the glutamate 318.

Belongs to the CobT family. Homodimer.

It carries out the reaction 5,6-dimethylbenzimidazole + nicotinate beta-D-ribonucleotide = alpha-ribazole 5'-phosphate + nicotinate + H(+). It functions in the pathway nucleoside biosynthesis; alpha-ribazole biosynthesis; alpha-ribazole from 5,6-dimethylbenzimidazole: step 1/2. Functionally, catalyzes the synthesis of alpha-ribazole-5'-phosphate from nicotinate mononucleotide (NAMN) and 5,6-dimethylbenzimidazole (DMB). The polypeptide is Nicotinate-nucleotide--dimethylbenzimidazole phosphoribosyltransferase (Escherichia coli O17:K52:H18 (strain UMN026 / ExPEC)).